The chain runs to 730 residues: Phosphoribosylformylglycinamidine synthase subunit PurL (730 aa).

Residue H44 is part of the active site. The ATP site is built by Y47 and K86. E88 contributes to the Mg(2+) binding site. Substrate is bound by residues 89–92 (SHNH) and R111. The active-site Proton acceptor is the H90. D112 is a Mg(2+) binding site. Q235 is a binding site for substrate. D263 lines the Mg(2+) pocket. A substrate-binding site is contributed by 307–309 (ESQ). ATP-binding residues include N489 and G526. N527 contributes to the Mg(2+) binding site. S529 contributes to the substrate binding site.

Belongs to the FGAMS family. Monomer. Part of the FGAM synthase complex composed of 1 PurL, 1 PurQ and 2 PurS subunits.

Its subcellular location is the cytoplasm. It carries out the reaction N(2)-formyl-N(1)-(5-phospho-beta-D-ribosyl)glycinamide + L-glutamine + ATP + H2O = 2-formamido-N(1)-(5-O-phospho-beta-D-ribosyl)acetamidine + L-glutamate + ADP + phosphate + H(+). It participates in purine metabolism; IMP biosynthesis via de novo pathway; 5-amino-1-(5-phospho-D-ribosyl)imidazole from N(2)-formyl-N(1)-(5-phospho-D-ribosyl)glycinamide: step 1/2. Part of the phosphoribosylformylglycinamidine synthase complex involved in the purines biosynthetic pathway. Catalyzes the ATP-dependent conversion of formylglycinamide ribonucleotide (FGAR) and glutamine to yield formylglycinamidine ribonucleotide (FGAM) and glutamate. The FGAM synthase complex is composed of three subunits. PurQ produces an ammonia molecule by converting glutamine to glutamate. PurL transfers the ammonia molecule to FGAR to form FGAM in an ATP-dependent manner. PurS interacts with PurQ and PurL and is thought to assist in the transfer of the ammonia molecule from PurQ to PurL. The polypeptide is Phosphoribosylformylglycinamidine synthase subunit PurL (Pelagibacter ubique (strain HTCC1062)).